The sequence spans 44 residues: U9-ctenitoxin-Co1a (44 aa).

4 cysteine pairs are disulfide-bonded: Cys3–Cys17, Cys10–Cys23, Cys16–Cys33, and Cys25–Cys31.

In terms of tissue distribution, expressed by the venom gland.

It localises to the secreted. Insecticidal neurotoxin that reversibly inhibits the N-methyl-D-aspartate (NMDA)-subtype of ionotropic glutamate receptor (GRIN) and inhibits inactivation of insect sodium channels (Nav). In vivo, is highly toxic to insects. The protein is U9-ctenitoxin-Co1a of Ctenus ornatus (Brazilian spider).